Reading from the N-terminus, the 184-residue chain is 20.9 kDa protein (184 aa).

The polypeptide is 20.9 kDa protein (Zymomonas mobilis subsp. mobilis (strain ATCC 10988 / DSM 424 / LMG 404 / NCIMB 8938 / NRRL B-806 / ZM1)).